A 232-amino-acid polypeptide reads, in one-letter code: 7-cyano-7-deazaguanine synthase (232 aa).

8-18 (FSGGQDSTTCL) is an ATP binding site. Zn(2+) contacts are provided by Cys187, Cys196, Cys199, and Cys202.

Belongs to the QueC family. Zn(2+) serves as cofactor.

The enzyme catalyses 7-carboxy-7-deazaguanine + NH4(+) + ATP = 7-cyano-7-deazaguanine + ADP + phosphate + H2O + H(+). It functions in the pathway purine metabolism; 7-cyano-7-deazaguanine biosynthesis. Catalyzes the ATP-dependent conversion of 7-carboxy-7-deazaguanine (CDG) to 7-cyano-7-deazaguanine (preQ(0)). In Vibrio parahaemolyticus serotype O3:K6 (strain RIMD 2210633), this protein is 7-cyano-7-deazaguanine synthase.